We begin with the raw amino-acid sequence, 326 residues long: MGVQFNDSIPKKNISITDLKNKTVAIDSMNIIYQFLSSIRLRDGAPLRNSKGEITSPYNGIFYKTIYLLNNEITPIWVFDGKPPELKLKTREERRKVKEKASKDYEIAKREENIEDMQKYAKRINYLEPNTVDNCKKLLKLMGIPYIDAPSEGEAQCAHMIKNGDAYCVVSQDYDALLYGAPRTVRNITASNKPLELMEIEDILKPLDISIDDLIDMAILIGTDYNIGGIKGIGPKKALTIIKNKKMNEYIKDIENYEEIKNIFKNPKVVDYTKEDIKLKSPNIEGLKEFLIEENDFSPNRILPSIKKLDKLLNEKRSQTSLDSWF.

The tract at residues 1–98 (MGVQFNDSIP…KTREERRKVK (98 aa)) is N-domain. Mg(2+)-binding residues include Asp27, Asp80, Glu152, Glu154, Asp173, Asp175, and Asp224. The I-domain stretch occupies residues 116 to 245 (DMQKYAKRIN…KKALTIIKNK (130 aa)). The tract at residues 318-326 (SQTSLDSWF) is interaction with PCNA.

This sequence belongs to the XPG/RAD2 endonuclease family. FEN1 subfamily. As to quaternary structure, interacts with PCNA. PCNA stimulates the nuclease activity without altering cleavage specificity. It depends on Mg(2+) as a cofactor.

Structure-specific nuclease with 5'-flap endonuclease and 5'-3' exonuclease activities involved in DNA replication and repair. During DNA replication, cleaves the 5'-overhanging flap structure that is generated by displacement synthesis when DNA polymerase encounters the 5'-end of a downstream Okazaki fragment. Binds the unpaired 3'-DNA end and kinks the DNA to facilitate 5' cleavage specificity. Cleaves one nucleotide into the double-stranded DNA from the junction in flap DNA, leaving a nick for ligation. Also involved in the base excision repair (BER) pathway. Acts as a genome stabilization factor that prevents flaps from equilibrating into structures that lead to duplications and deletions. Also possesses 5'-3' exonuclease activity on nicked or gapped double-stranded DNA. The chain is Flap endonuclease 1 from Methanococcus aeolicus (strain ATCC BAA-1280 / DSM 17508 / OCM 812 / Nankai-3).